Here is a 612-residue protein sequence, read N- to C-terminus: uncharacterized protein (612 aa).

Disordered stretches follow at residues 46–113 (QQPQ…MVTP), 129–185 (QQYQ…TPTY), 313–360 (TKDG…GSTM), 457–488 (FSISGGGGSGGIPSQSGIIKKHKKPSGSSGYG), and 593–612 (NNTNNTNNTNNTNNNTVVTI). Over residues 58–102 (HQQIPISTQSTPNSTSSTTTTTTTTTSTTTAPTSNSKKSKTTPSN) the composition is skewed to low complexity. Composition is skewed to polar residues over residues 103–113 (GNKPTSGMVTP) and 129–138 (QQYQPNSQLQ). The segment covering 143 to 169 (IIKKSSLSTTPNNINNNNNNNNNTNTI) has biased composition (low complexity). Over residues 175 to 185 (GGNNSAPTPTY) the composition is skewed to polar residues. Low complexity predominate over residues 323-359 (TTSSTSTSSSATSTTSSSTSSTTTTSSTSNSSTPGST).

This is an uncharacterized protein from Dictyostelium discoideum (Social amoeba).